We begin with the raw amino-acid sequence, 317 residues long: Universal stress protein MT2052 (317 aa).

ATP is bound by residues Gly-13, Gly-128–Ala-134, Ser-142–Val-143, Gly-175, Asp-208, Gly-277–Gly-283, and Ser-291–Ser-293.

It belongs to the universal stress protein A family.

The polypeptide is Universal stress protein MT2052 (Mycobacterium tuberculosis (strain CDC 1551 / Oshkosh)).